The primary structure comprises 106 residues: Urease subunit beta (106 aa).

This sequence belongs to the urease beta subunit family. As to quaternary structure, heterotrimer of UreA (gamma), UreB (beta) and UreC (alpha) subunits. Three heterotrimers associate to form the active enzyme.

Its subcellular location is the cytoplasm. It catalyses the reaction urea + 2 H2O + H(+) = hydrogencarbonate + 2 NH4(+). Its pathway is nitrogen metabolism; urea degradation; CO(2) and NH(3) from urea (urease route): step 1/1. The sequence is that of Urease subunit beta from Synechococcus sp. (strain WH7805).